Consider the following 446-residue polypeptide: Baeyer-Villiger oxidase mdpL (446 aa).

Belongs to the AflY oxidoreductase family. NADPH is required as a cofactor.

It participates in secondary metabolite biosynthesis. Its function is as follows. Baeyer-Villiger oxidase; part of the gene cluster that mediates the biosynthesis of monodictyphenone, a prenyl xanthone derivative. The pathway begins with the synthesis of atrochrysone thioester by the polyketide synthase (PKS) mdpG. The atrochrysone carboxyl ACP thioesterase mdpF then breaks the thioester bond and releases the atrochrysone carboxylic acid from mdpG. The atrochrysone carboxylic acid is then converted to atrochrysone which is further transformed into emodin anthrone. The next step is performed by the anthrone oxygenase mdpH that catalyzes the oxidation of emodinanthrone to emodin. Emodin is further modified to yield monodictyphenone via several steps involving mdpB, mdpC mdpJ, mdpK and mdpL. These enzymes with xptA, xptB and xptC are also proposed to be involved in the synthesis of shamixanthone from emodin. Especially, direct reduction of emodin by the short chain dehydrogenase mdpC followed by dehydration catalyzed by the scytalone dehydratase-like protein mdpB gives loss of oxygen and formation of chrysophanol intermediate in two simple steps. The sequence is that of Baeyer-Villiger oxidase mdpL from Emericella nidulans (strain FGSC A4 / ATCC 38163 / CBS 112.46 / NRRL 194 / M139) (Aspergillus nidulans).